Consider the following 123-residue polypeptide: Small ribosomal subunit protein uS12 (123 aa).

Asp89 carries the post-translational modification 3-methylthioaspartic acid.

Belongs to the universal ribosomal protein uS12 family. As to quaternary structure, part of the 30S ribosomal subunit. Contacts proteins S8 and S17. May interact with IF1 in the 30S initiation complex.

Functionally, with S4 and S5 plays an important role in translational accuracy. Interacts with and stabilizes bases of the 16S rRNA that are involved in tRNA selection in the A site and with the mRNA backbone. Located at the interface of the 30S and 50S subunits, it traverses the body of the 30S subunit contacting proteins on the other side and probably holding the rRNA structure together. The combined cluster of proteins S8, S12 and S17 appears to hold together the shoulder and platform of the 30S subunit. This is Small ribosomal subunit protein uS12 from Orientia tsutsugamushi (strain Boryong) (Rickettsia tsutsugamushi).